The primary structure comprises 518 residues: Vesicular inhibitory amino acid transporter (518 aa).

The Cytoplasmic segment spans residues 1 to 125 (MATLIRSKLS…WNVTNAIQGM (125 aa)). A helical membrane pass occupies residues 126–146 (FVLGLPYAILHGGYLGLFLII). The Lumenal, vesicle segment spans residues 147–197 (FAAVVCCYTGKILIACLYEENEDGETVRVRDSYVDIANACCAPRFPKLGGR). A helical transmembrane segment spans residues 198–218 (VVNVAQIIELVMTCILYVVVS). The Cytoplasmic segment spans residues 219-258 (GNLMYNSFPNLPISQKSWSIMATAVLLPCAFLKNLKAVSK). Residues 259–279 (FSLLCTVAHFVINILVIAYCL) form a helical membrane-spanning segment. Residues 280–298 (SRARDWAWDKVKFYIDVKK) are Lumenal, vesicle-facing. A helical transmembrane segment spans residues 299-319 (FPISIGIIVFSYTSQIFLPSL). Over 320 to 334 (EGNMQSPREFHCMMN) the chain is Cytoplasmic. A helical transmembrane segment spans residues 335 to 355 (WTHIAACILKGLFALVAYLTW). Over 356–376 (ADETKEVITDNLPSTIRAVVN) the chain is Lumenal, vesicle. Residues 377 to 397 (LFLVSKALLSYPLPFFAAVEV) form a helical membrane-spanning segment. The Cytoplasmic portion of the chain corresponds to 398–431 (LEKSLFQEGARAFFPNCYGGDGRLKSWGLTLRCA). The helical transmembrane segment at 432-452 (LVVFTLLMAIYVPHFALLMGL) threads the bilayer. At 453 to 454 (TG) the chain is on the lumenal, vesicle side. Residues 455 to 475 (SLTGAGLCFLLPSLFHLKLMW) form a helical membrane-spanning segment. The Cytoplasmic segment spans residues 476-482 (RQLLWHQ). The chain crosses the membrane as a helical span at residues 483–503 (VFFDVSIFVIGSICSVSGFVH). Residues 504-518 (SLEGLIEAYAYNIED) lie on the Lumenal, vesicle side of the membrane.

This sequence belongs to the amino acid/polyamine transporter 2 family. As to expression, initially expressed in late neurula stages in the anterior spinal cord. By early tailbud stages, expression extends posteriorly along the entire developing spinal cord and appears in the hindbrain. In late tailbud embryos, expressed in the forebrain, midbrain, hindbrain, spinal cord and retina. In swimming tadpoles, expressed in an extended and more intense pattern including interneurons.

The protein localises to the cytoplasmic vesicle membrane. It localises to the presynapse. It carries out the reaction 4-aminobutanoate(out) + n H(+)(in) = 4-aminobutanoate(in) + n H(+)(out). It catalyses the reaction glycine(out) + n H(+)(in) = glycine(in) + n H(+)(out). The enzyme catalyses beta-alanine(out) + n H(+)(in) = beta-alanine(in) + n H(+)(out). Antiporter that exchanges vesicular protons for cytosolic 4-aminobutanoate or to a lesser extend glycine, thus allowing their secretion from nerve terminals. The transport is equally dependent on the chemical and electrical components of the proton gradient. May also transport beta-alanine. Acidification of GABAergic synaptic vesicles is a prerequisite for 4-aminobutanoate uptake. The sequence is that of Vesicular inhibitory amino acid transporter from Xenopus laevis (African clawed frog).